The sequence spans 527 residues: Cyclin-L1 (527 aa).

The interval 1–37 (MASGPHPTSTAAAASASSAAPSAGGSSSGTTTTTTTT) is disordered. Cyclin-like stretches follow at residues 89–191 (ELIQ…RVLK) and 204–288 (KIIV…ETLR). Phosphothreonine is present on Thr326. A disordered region spans residues 327–527 (PALSTLGGFS…SRSGHGRHRR (201 aa)). Phosphoserine is present on residues Ser336 and Ser339. Glycyl lysine isopeptide (Lys-Gly) (interchain with G-Cter in SUMO2) cross-links involve residues Lys340 and Lys348. The segment covering 343 to 353 (SPREVKAEEKS) has biased composition (basic and acidic residues). A phosphoserine mark is found at Ser353 and Ser356. The segment covering 362–371 (VKKEPEDRQQ) has biased composition (basic and acidic residues). Lys363 participates in a covalent cross-link: Glycyl lysine isopeptide (Lys-Gly) (interchain with G-Cter in SUMO2). Ser375 carries the post-translational modification Phosphoserine. 4 stretches are compositionally biased toward basic residues: residues 383 to 419 (DSKR…RRSR), 439 to 453 (RRHH…KAKH), 461 to 477 (SNRH…RSQS), and 487 to 499 (KKHR…HRDR). The tract at residues 391–433 (RSASRSRSRTRSRSRSHTPRRHYNNRRSRSGTYSSRSRSRSRS) is RS. Residue Ser446 is modified to Phosphoserine. Positions 500–509 (RERSRSFERS) are enriched in basic and acidic residues. The segment covering 510–527 (HKGKHHGGSRSGHGRHRR) has biased composition (basic residues).

It belongs to the cyclin family. Cyclin L subfamily. As to quaternary structure, interacts with POLR2A via its hyperphosphorylated C-terminal domain (CTD). Interacts with CDK11A, CDK11B, CDK12 and CDK13. May form a ternary complex with CDK11B and casein kinase II (CKII). Interacts with pre-mRNA-splicing factors, including at least SRSF1, SRSF2 AND SRSF7/SLU7. In terms of tissue distribution, ubiquitous with higher level in liver; expressed in striatal neurons.

The protein localises to the nucleus speckle. It is found in the nucleus. The protein resides in the nucleoplasm. Its function is as follows. Involved in pre-mRNA splicing. Functions in association with cyclin-dependent kinases (CDKs). May play a role in the regulation of RNA polymerase II (pol II). Inhibited by the CDK-specific inhibitor CDKN1A/p21. The chain is Cyclin-L1 (Ccnl1) from Rattus norvegicus (Rat).